A 382-amino-acid polypeptide reads, in one-letter code: tRNA (guanine(26)-N(2))-dimethyltransferase (382 aa).

Residues 4-373 (VEIIEGKARI…KNLDEIKECI (370 aa)) enclose the Trm1 methyltransferase domain. The S-adenosyl-L-methionine site is built by R44, R69, and D87. 4 residues coordinate Zn(2+): C246, C249, C263, and C266.

This sequence belongs to the class I-like SAM-binding methyltransferase superfamily. Trm1 family.

The enzyme catalyses guanosine(26) in tRNA + 2 S-adenosyl-L-methionine = N(2)-dimethylguanosine(26) in tRNA + 2 S-adenosyl-L-homocysteine + 2 H(+). In terms of biological role, dimethylates a single guanine residue at position 26 of a number of tRNAs using S-adenosyl-L-methionine as donor of the methyl groups. This is tRNA (guanine(26)-N(2))-dimethyltransferase from Sulfolobus acidocaldarius (strain ATCC 33909 / DSM 639 / JCM 8929 / NBRC 15157 / NCIMB 11770).